We begin with the raw amino-acid sequence, 558 residues long: Tektin-5 (558 aa).

A coiled-coil region spans residues 347–381 (ISEETDVKNKLQTQLAKILQEIFQAENTIMLLERA).

The protein belongs to the tektin family. In terms of assembly, microtubule inner protein component of sperm flagellar doublet microtubules. Interacts with TEKT3. Post-translationally, ubiquitinated, leading to its degradation. Deubiquitinated by USP16, promoting its stability. Specifically expressed in testis.

It is found in the cytoplasm. It localises to the cytoskeleton. The protein resides in the flagellum axoneme. In terms of biological role, sperm-specific microtubule inner protein (MIP) part of the dynein-decorated doublet microtubules (DMTs) in flagellar axoneme. Forms an extensive interaction network in different conformations that reinforces the helix bundle composed by other tektin proteins (TEKT1 to TEKT4) and MIPs to anchor the tektin bundle onto the tubulin wall of A-tubule of the sperm flagellum. This Rattus norvegicus (Rat) protein is Tektin-5.